Consider the following 229-residue polypeptide: Transmembrane protein 182 (229 aa).

The first 26 residues, 1–26 (MRLNIAIFFGALFGALGVLLFLVAFG), serve as a signal peptide directing secretion. Residues 27–114 (SDYWLLATEV…SYDSAVIYRG (88 aa)) lie on the Extracellular side of the membrane. Residue asparagine 47 is glycosylated (N-linked (GlcNAc...) asparagine). Residues 49–59 (TFHHEGFFWRC) form an interaction with ITGB1 region. Asparagine 102 carries N-linked (GlcNAc...) asparagine glycosylation. A helical transmembrane segment spans residues 115–135 (FWAVLMLLGVVAVVIASFLII). Residues 136–153 (CAAPFASHFLYKAGGGSY) lie on the Cytoplasmic side of the membrane. A helical membrane pass occupies residues 154–174 (IAAGILFSLVVMLYVIWVQAV). Residues 175 to 200 (ADMESYRNMKMKDCLDFTPSVLYGWS) lie on the Extracellular side of the membrane. The chain crosses the membrane as a helical span at residues 201-221 (FFLAPAGIFFSLLAGLLFLVV). Topologically, residues 222-229 (GWHIQIHH) are cytoplasmic.

This sequence belongs to the TMEM182 family. As to quaternary structure, interacts with ITGB1.

It localises to the cell membrane. Functionally, negatively regulates myogenesis and skeletal muscle regeneration via its association with ITGB1. Modulates ITGB1 activation by decreasing ITGB1-LAMB1 interaction and inhibiting ITGB1-mediated intracellular signaling during myogenesis. This Homo sapiens (Human) protein is Transmembrane protein 182 (TMEM182).